A 775-amino-acid chain; its full sequence is Putative late blight resistance protein homolog R1A-3 (775 aa).

A coiled-coil region spans residues 16 to 39 (PRMNEEIVGFEDVIENLRKKLLSE). In terms of domain architecture, NB-ARC spans 17–237 (RMNEEIVGFE…LSEMEKEVEC (221 aa)). 50 to 57 (GMPGLGKT) contributes to the ATP binding site. One can recognise an HMA domain in the interval 711–775 (IKKMILQFDI…VGKLIDSGML (65 aa)).

The protein belongs to the disease resistance NB-LRR family.

The protein localises to the cytoplasm. It localises to the membrane. Its function is as follows. Confers resistance to late blight (Phytophthora infestans) races carrying the avirulence gene Avr1. Resistance proteins guard the plant against pathogens that contain an appropriate avirulence protein via an indirect interaction with this avirulence protein. That triggers a defense system including the hypersensitive response, which restricts the pathogen growth. The chain is Putative late blight resistance protein homolog R1A-3 (R1A-3) from Solanum demissum (Wild potato).